The sequence spans 269 residues: 3-methyl-2-oxobutanoate hydroxymethyltransferase (269 aa).

Residues aspartate 50 and aspartate 89 each contribute to the Mg(2+) site. Residues 50–51, aspartate 89, and lysine 119 each bind 3-methyl-2-oxobutanoate; that span reads DS. A Mg(2+)-binding site is contributed by glutamate 121. Glutamate 187 serves as the catalytic Proton acceptor.

This sequence belongs to the PanB family. Homodecamer; pentamer of dimers. The cofactor is Mg(2+).

It is found in the cytoplasm. The catalysed reaction is 3-methyl-2-oxobutanoate + (6R)-5,10-methylene-5,6,7,8-tetrahydrofolate + H2O = 2-dehydropantoate + (6S)-5,6,7,8-tetrahydrofolate. Its pathway is cofactor biosynthesis; (R)-pantothenate biosynthesis; (R)-pantoate from 3-methyl-2-oxobutanoate: step 1/2. In terms of biological role, catalyzes the reversible reaction in which hydroxymethyl group from 5,10-methylenetetrahydrofolate is transferred onto alpha-ketoisovalerate to form ketopantoate. The protein is 3-methyl-2-oxobutanoate hydroxymethyltransferase (panB) of Corynebacterium glutamicum (strain ATCC 13032 / DSM 20300 / JCM 1318 / BCRC 11384 / CCUG 27702 / LMG 3730 / NBRC 12168 / NCIMB 10025 / NRRL B-2784 / 534).